We begin with the raw amino-acid sequence, 364 residues long: UDP-arabinopyranose mutase 1 (364 aa).

The DXD motif motif lies at 110-112; that stretch reads DDD. Residue Arg-158 is glycosylated (N-linked (Glc...) arginine).

This sequence belongs to the RGP family. As to quaternary structure, heteromers with UAM2 and UAM3. Mn(2+) is required as a cofactor. It depends on Mg(2+) as a cofactor. Reversibly glycosylated in vitro at Arg-158 by UDP-glucose. Reversibly glycosylated by UDP-xylose and UDP-galactose.

The protein resides in the golgi apparatus. It carries out the reaction UDP-beta-L-arabinofuranose = UDP-beta-L-arabinopyranose. Its function is as follows. UDP-L-arabinose mutase involved in the biosynthesis of cell wall non-cellulosic polysaccharides. Catalyzes the interconvertion of UDP-L-arabinopyranose (UDP-Arap) and UDP-L-arabinofuranose (UDP-Araf). Preferentially catalyzes the formation of UDP-Arap from UDP-Araf. At thermodynamic equilibrium in vitro the ratio of the pyranose form over the furanose form is 90:10. Is probably active as heteromer in vivo. The protein is UDP-arabinopyranose mutase 1 of Oryza sativa subsp. japonica (Rice).